The chain runs to 456 residues: GTPase Der (456 aa).

EngA-type G domains are found at residues 3 to 167 (FTIA…PPSD) and 185 to 360 (IRVA…AVWN). Residues 9–16 (GRPNVGKS), 56–60 (DTAGL), and 119–122 (NKSE) each bind GTP. The disordered stretch occupies residues 162-181 (IVPPSDDEDDEREETDEERA). A compositionally biased stretch (acidic residues) spans 166–178 (SDDEDDEREETDE). Residues 191 to 198 (GRPNAGKS), 238 to 242 (DTAGL), and 303 to 306 (NKWD) contribute to the GTP site. A KH-like domain is found at 361-445 (RRVPTAALNR…PVRITLREKA (85 aa)).

The protein belongs to the TRAFAC class TrmE-Era-EngA-EngB-Septin-like GTPase superfamily. EngA (Der) GTPase family. In terms of assembly, associates with the 50S ribosomal subunit.

Its function is as follows. GTPase that plays an essential role in the late steps of ribosome biogenesis. This Bradyrhizobium sp. (strain ORS 278) protein is GTPase Der.